Consider the following 599-residue polypeptide: Elongation factor 4 (599 aa).

A tr-type G domain is found at 2 to 184; the sequence is KHIRNFSIIA…RLVRDIPPPQ (183 aa). Residues 14-19 and 131-134 contribute to the GTP site; these read DHGKST and NKID.

The protein belongs to the TRAFAC class translation factor GTPase superfamily. Classic translation factor GTPase family. LepA subfamily.

The protein resides in the cell inner membrane. The enzyme catalyses GTP + H2O = GDP + phosphate + H(+). Required for accurate and efficient protein synthesis under certain stress conditions. May act as a fidelity factor of the translation reaction, by catalyzing a one-codon backward translocation of tRNAs on improperly translocated ribosomes. Back-translocation proceeds from a post-translocation (POST) complex to a pre-translocation (PRE) complex, thus giving elongation factor G a second chance to translocate the tRNAs correctly. Binds to ribosomes in a GTP-dependent manner. This Yersinia enterocolitica serotype O:8 / biotype 1B (strain NCTC 13174 / 8081) protein is Elongation factor 4.